Consider the following 204-residue polypeptide: Bcl-2-like protein 10 (204 aa).

Residues 86-105 carry the BH1 motif; it reads LSDSPGPTWGRVVTLVTFAG. Positions 118-133 are required for Ca(2+) binding; the sequence is WKKWGFQPRLKEQEGD. Glycyl lysine isopeptide (Lys-Gly) (interchain with G-Cter in ubiquitin) cross-links involve residues lysine 119, lysine 120, and lysine 128. Residues 156 to 167 carry the BH2 motif; the sequence is WLQAQGGWDGFC. The chain crosses the membrane as a helical span at residues 183–200; that stretch reads LVQAFLSCLLTTAFIYLW.

The protein belongs to the Bcl-2 family. As to quaternary structure, interacts with BAX. Interacts with BCL2 and BCL2L1/BCLX. Interacts with APAF1. Interacts with ITPR1, ITPR2 and ITPR3; the interaction with ITPR1 is increased in the presence of AHCLY1. Interacts with AHCYL1. Interacts with HIP1R (via ENTH and I/LWEQ domains). Interacts with CASP9. Interacts with BCL2L11/BIM. Interacts with BIK. Interacts with UBQLN4. Interacts with NME2/NM23-H2. Interacts with PMAIP1/NOXA. Interacts with TPX2. Interacts with UBQLN1; in the cytoplasm. Interacts (via BH1 domain) with BECN1. Ca(2+) is required as a cofactor. Post-translationally, monoubiquitinated by UBQLN1; results in stabilization of BCL2L10 protein abundance and in relocalization from mitochondria to cytoplasm. In terms of tissue distribution, widely expressed in adult tissues. Preferentially expressed in lung, liver and kidney.

The protein localises to the mitochondrion. Its subcellular location is the nucleus membrane. The protein resides in the endoplasmic reticulum. It localises to the cytoplasm. It is found in the cytoskeleton. The protein localises to the spindle. Promotes cell survival by suppressing apoptosis induced by BAX but not BAK. Increases binding of AHCYL1/IRBIT to ITPR1. Reduces ITPR1-mediated calcium release from the endoplasmic reticulum cooperatively with AHCYL1/IRBIT under normal cellular conditions. Under apoptotic stress conditions, dissociates from ITPR1 and is displaced from mitochondria-associated endoplasmic reticulum membranes, leading to increased Ca(2+) transfer to mitochondria which promotes apoptosis. Required for the correct formation of the microtubule organizing center during oocyte cell division, potentially via regulation of protein abundance and localization of other microtubule organizing center components such as AURKA and TPX2. The polypeptide is Bcl-2-like protein 10 (Homo sapiens (Human)).